A 466-amino-acid chain; its full sequence is Cysteine--tRNA ligase (466 aa).

Cys28 lines the Zn(2+) pocket. The 'HIGH' region motif lies at 30–40; the sequence is PTVYNYIHIGN. Positions 208, 233, and 237 each coordinate Zn(2+). Residues 265 to 269 carry the 'KMSKS' region motif; that stretch reads KMSKS. Residue Lys268 coordinates ATP.

This sequence belongs to the class-I aminoacyl-tRNA synthetase family. In terms of assembly, monomer. Requires Zn(2+) as cofactor.

The protein localises to the cytoplasm. The catalysed reaction is tRNA(Cys) + L-cysteine + ATP = L-cysteinyl-tRNA(Cys) + AMP + diphosphate. This chain is Cysteine--tRNA ligase, found in Staphylococcus carnosus (strain TM300).